We begin with the raw amino-acid sequence, 644 residues long: Threonine--tRNA ligase (644 aa).

In terms of domain architecture, TGS spans 1–61 (MNVSIEGQML…DGTTTIEPVY (61 aa)). The interval 241–532 (DHRKLGQQLD…LIEQYAGAFP (292 aa)) is catalytic. Residues Cys333, His384, and His509 each coordinate Zn(2+).

It belongs to the class-II aminoacyl-tRNA synthetase family. Homodimer. Zn(2+) is required as a cofactor.

It localises to the cytoplasm. The enzyme catalyses tRNA(Thr) + L-threonine + ATP = L-threonyl-tRNA(Thr) + AMP + diphosphate + H(+). Catalyzes the attachment of threonine to tRNA(Thr) in a two-step reaction: L-threonine is first activated by ATP to form Thr-AMP and then transferred to the acceptor end of tRNA(Thr). Also edits incorrectly charged L-seryl-tRNA(Thr). This is Threonine--tRNA ligase from Nitratidesulfovibrio vulgaris (strain ATCC 29579 / DSM 644 / CCUG 34227 / NCIMB 8303 / VKM B-1760 / Hildenborough) (Desulfovibrio vulgaris).